We begin with the raw amino-acid sequence, 386 residues long: Myosin light chain kinase family member 4 (386 aa).

The residue at position 100 (Ser100) is a Phosphoserine. The region spanning Val107 to Leu361 is the Protein kinase domain. ATP-binding positions include Leu113–Val121 and Lys136. Asp227 serves as the catalytic Proton acceptor.

The protein belongs to the protein kinase superfamily. CAMK Ser/Thr protein kinase family.

It carries out the reaction L-seryl-[protein] + ATP = O-phospho-L-seryl-[protein] + ADP + H(+). The catalysed reaction is L-threonyl-[protein] + ATP = O-phospho-L-threonyl-[protein] + ADP + H(+). The protein is Myosin light chain kinase family member 4 (Mylk4) of Mus musculus (Mouse).